We begin with the raw amino-acid sequence, 88 residues long: Large ribosomal subunit protein bL27 (88 aa).

The disordered stretch occupies residues 1–22; that stretch reads MAQKKAGGSSRNGRDSAGRRLG.

The protein belongs to the bacterial ribosomal protein bL27 family.

The chain is Large ribosomal subunit protein bL27 from Gluconobacter oxydans (strain 621H) (Gluconobacter suboxydans).